The primary structure comprises 175 residues: NADH dehydrogenase [ubiquinone] 1 alpha subcomplex assembly factor 4 (175 aa).

A lipid anchor (N-myristoyl glycine) is attached at G2. Phosphoserine is present on S35.

This sequence belongs to the NDUFAF4 family. As to quaternary structure, binds calmodulin. Interacts with NDUFAF3. (Microbial infection) Interacts with the vesicular stomatitis virus matrix protein/M; the interaction inhibits viral propagation. In terms of processing, phosphorylated on serine. Prolactin stimulate serine phosphorylation.

The protein resides in the mitochondrion. It is found in the membrane. Involved in the assembly of mitochondrial NADH:ubiquinone oxidoreductase complex (complex I). May be involved in cell proliferation and survival of hormone-dependent tumor cells. May be a regulator of breast tumor cell invasion. In Homo sapiens (Human), this protein is NADH dehydrogenase [ubiquinone] 1 alpha subcomplex assembly factor 4.